The primary structure comprises 630 residues: A disintegrin and metalloproteinase with thrombospondin motifs 4 (630 aa).

Residues 1–5 (RRTKR) constitute a propeptide that is removed on maturation. One can recognise a Peptidase M12B domain in the interval 11-221 (RFVETLVVAD…GYGHCLLDKP (211 aa)). Disulfide bonds link C86–C138, C115–C120, C132–C216, C170–C200, C242–C265, C253–C275, C260–C294, C288–C299, C325–C362, C329–C367, and C340–C352. N96 carries an N-linked (GlcNAc...) asparagine glycan. A Zn(2+)-binding site is contributed by H154. The active site involves E155. 2 residues coordinate Zn(2+): H158 and H164. The region spanning 233 to 303 (GKDYDADRQC…CMGGRCLHVD (71 aa)) is the Disintegrin domain. The 56-residue stretch at 313-368 (AGGWGPWGPWGDCSRTCGGGVQFSSRDCTKPVPRNGGKYCEGRRTPFRSCNTKNCP) folds into the TSP type-1 domain. N474 carries an N-linked (GlcNAc...) asparagine glycan. The tract at residues 479–630 (SKQSGSFKKF…LRKRTWAGRK (152 aa)) is spacer.

As to quaternary structure, interacts with SRPX2. The cofactor is Zn(2+). The precursor is cleaved by a furin endopeptidase. In terms of processing, glycosylated. Can be O-fucosylated by POFUT2 on a serine or a threonine residue found within the consensus sequence C1-X(2)-(S/T)-C2-G of the TSP type-1 repeat domains where C1 and C2 are the first and second cysteine residue of the repeat, respectively. Fucosylated repeats can then be further glycosylated by the addition of a beta-1,3-glucose residue by the glucosyltransferase, B3GALTL. Fucosylation mediates the efficient secretion of ADAMTS family members. Can also be C-glycosylated with one or two mannose molecules on tryptophan residues within the consensus sequence W-X-X-W of the TPRs, and N-glycosylated. These other glycosylations can also facilitate secretion. As to expression, brain specific.

It is found in the secreted. The protein resides in the extracellular space. The protein localises to the extracellular matrix. It catalyses the reaction Glutamyl endopeptidase. Bonds cleaved include 370-Thr-Glu-Gly-Glu-|-Ala-Arg-Gly-Ser-377 in the interglobular domain of mammalian aggrecan.. Functionally, cleaves aggrecan, a cartilage proteoglycan, at the '392-Glu-|-Ala-393' site and may be involved in its turnover. Also cleaves COMP. May play an important role in the destruction of aggrecan in arthritic diseases. The sequence is that of A disintegrin and metalloproteinase with thrombospondin motifs 4 (Adamts4) from Rattus norvegicus (Rat).